The following is a 183-amino-acid chain: Oligoribonuclease (183 aa).

Residues 9–172 (LIWIDLEMTG…DDIRDSISEL (164 aa)) enclose the Exonuclease domain. Residue Y130 is part of the active site.

It belongs to the oligoribonuclease family.

It localises to the cytoplasm. 3'-to-5' exoribonuclease specific for small oligoribonucleotides. The protein is Oligoribonuclease of Acinetobacter baylyi (strain ATCC 33305 / BD413 / ADP1).